The sequence spans 229 residues: Probable septum site-determining protein MinC (229 aa).

The protein belongs to the MinC family. In terms of assembly, interacts with MinD and FtsZ.

Its function is as follows. Cell division inhibitor that blocks the formation of polar Z ring septums. Rapidly oscillates between the poles of the cell to destabilize FtsZ filaments that have formed before they mature into polar Z rings. Prevents FtsZ polymerization. This Ruminiclostridium cellulolyticum (strain ATCC 35319 / DSM 5812 / JCM 6584 / H10) (Clostridium cellulolyticum) protein is Probable septum site-determining protein MinC.